The primary structure comprises 264 residues: Thymidylate synthase (264 aa).

Arg-21 is a dUMP binding site. (6R)-5,10-methylene-5,6,7,8-tetrahydrofolate is bound at residue His-51. 126–127 (RR) is a binding site for dUMP. The Nucleophile role is filled by Cys-146. Residues 166–169 (RSCD), Asn-177, and 207–209 (HLY) each bind dUMP. Asp-169 serves as a coordination point for (6R)-5,10-methylene-5,6,7,8-tetrahydrofolate. Ala-263 contributes to the (6R)-5,10-methylene-5,6,7,8-tetrahydrofolate binding site.

This sequence belongs to the thymidylate synthase family. Bacterial-type ThyA subfamily. In terms of assembly, homodimer.

Its subcellular location is the cytoplasm. It catalyses the reaction dUMP + (6R)-5,10-methylene-5,6,7,8-tetrahydrofolate = 7,8-dihydrofolate + dTMP. The protein operates within pyrimidine metabolism; dTTP biosynthesis. Catalyzes the reductive methylation of 2'-deoxyuridine-5'-monophosphate (dUMP) to 2'-deoxythymidine-5'-monophosphate (dTMP) while utilizing 5,10-methylenetetrahydrofolate (mTHF) as the methyl donor and reductant in the reaction, yielding dihydrofolate (DHF) as a by-product. This enzymatic reaction provides an intracellular de novo source of dTMP, an essential precursor for DNA biosynthesis. This is Thymidylate synthase from Buchnera aphidicola subsp. Baizongia pistaciae (strain Bp).